A 1419-amino-acid polypeptide reads, in one-letter code: DNA-directed RNA polymerase subunit beta' (1419 aa).

Residues Cys71, Cys73, Cys86, and Cys89 each coordinate Zn(2+). Mg(2+)-binding residues include Asp461, Asp463, and Asp465. Zn(2+) contacts are provided by Cys815, Cys889, Cys896, and Cys899.

It belongs to the RNA polymerase beta' chain family. In terms of assembly, the RNAP catalytic core consists of 2 alpha, 1 beta, 1 beta' and 1 omega subunit. When a sigma factor is associated with the core the holoenzyme is formed, which can initiate transcription. It depends on Mg(2+) as a cofactor. Zn(2+) serves as cofactor.

The enzyme catalyses RNA(n) + a ribonucleoside 5'-triphosphate = RNA(n+1) + diphosphate. DNA-dependent RNA polymerase catalyzes the transcription of DNA into RNA using the four ribonucleoside triphosphates as substrates. This chain is DNA-directed RNA polymerase subunit beta', found in Actinobacillus succinogenes (strain ATCC 55618 / DSM 22257 / CCUG 43843 / 130Z).